A 311-amino-acid polypeptide reads, in one-letter code: Catechol 1,2-dioxygenase 1 (311 aa).

The Fe cation site is built by tyrosine 164, tyrosine 200, histidine 224, and histidine 226.

This sequence belongs to the intradiol ring-cleavage dioxygenase family. In terms of assembly, homodimer. Fe(3+) is required as a cofactor.

It catalyses the reaction catechol + O2 = cis,cis-muconate + 2 H(+). It functions in the pathway aromatic compound metabolism; beta-ketoadipate pathway; 5-oxo-4,5-dihydro-2-furylacetate from catechol: step 1/3. In terms of biological role, can cleave 4-methyl-, 4-chloro-, and 3-methoxycatechol at lower rates than catechol, but has no activity with 4-nitrocatechol or protocatechuic acid. This is Catechol 1,2-dioxygenase 1 (catA1) from Acinetobacter lwoffii.